A 1284-amino-acid chain; its full sequence is MAYKIKKVNRGVERRDYRKVSGNLELPNLIEIQTKTFEWFKTKGIDEVLNEFFAMSSNDASASLFLEGWEIKEAKISPSKAKEQSKIYDAPIYVDLQLMFTKTEDISKEFEEIVEKDVKKVLSNWIAEKTDSKNVSLVKNTDNIYFFDVKLKGTEKNDLFQITILEEKEDIIVAEVSVRKWGQVFFGDFPLMTDAGTFVINGSQKVIVSQLVRSPGSYFKTEINNKTGESLYNGDIIPSRGTWLEFETDTKKTAETTNSLFVKIDKSRKTTATSFLKILGLDRDTILNIYDKDKVIVETLKNDNDTGDTYADWAQHVQEIYKKIRQGETATSDGASKYINGLLFDRRKYDLTKAGRFKLQQKLAVKNRLMGRILAEDIVDASGKILVAKNTEISKANIKEVSDALSQDGVMVSSIEYREDIPGSRQIQKVKVYQDNNSKDETFTIVGITPNSKEEHITVVDIVATVSYLLGLEYNIGEYDDIDNLANRRVRTVGELLQNQFRMGLTRIDKNVKEKLSTSDLYKVKVSTIINAKPLTAVIGEFFNLSQLSQFMDQINPLAELTNKRRLTALGPGGLSRDRASLEVRDVHPSHYGRICPIETPEGPNIGLINNLSTYAIVDELGFIRTPYLKVIDGVIQNEHEYLSADEEKEYIISQSNVTKDENGKILDETVVSHYKGDDYIAKVSEVQFIDVSPKQIVSVATSAIPFLENDDANRALMGANMQRQAVPTIVPESPFVGTGIEFEAARDSGVCIVATENGIVKYVDAKQITVESKAGIKTYTLANFERSNNGSSIVQKPIVKVGDSIEAGQIIADGPSVDNGELALGQNVVVAFTTYNGYNFEDAIVMSERVIMEDKFTSVHIDEYVLEVRNTKQGAEEITSEIPNISDNAKKYLDNEGIVAIGTEVKTGDILVGKVTPKGQTQLSPEDKLLHAIFGEKSRSVKDNSLKVPNGGEGIVQSVKRFKAKSAANPDGIDLPADVLEVIKVYIVQKRKIQEGDKMSGRHGNKGIISKVLPVEDMPHLEDGTPVDILLNPQGIPSRMNIGQILEIHLGMAAKKLGVKIATPVFEGVNSNDLDEIMAEAGMENYGKVKLIDGQTGEAIDKPISVGVMYMLKLSHMVDDKLHARSVGPYSLITQQPLGGKAQNGGQRFGEMEVWALEAYGAAHTLREILTIKSDDLKGRTKTYEAIVRSKNIPTPGTPESFNVLSKEIMGLGFDIYLLDNKGNKSQINAYDDDNDLINDESMKHASIDKLTFEDSISLVEIEDLDSFEEVDESEINLSFEEE.

This sequence belongs to the RNA polymerase beta chain family. The RNAP catalytic core consists of 2 alpha, 1 beta, 1 beta' and 1 omega subunit. When a sigma factor is associated with the core the holoenzyme is formed, which can initiate transcription.

It catalyses the reaction RNA(n) + a ribonucleoside 5'-triphosphate = RNA(n+1) + diphosphate. Its function is as follows. DNA-dependent RNA polymerase catalyzes the transcription of DNA into RNA using the four ribonucleoside triphosphates as substrates. The sequence is that of DNA-directed RNA polymerase subunit beta from Mesoplasma florum (strain ATCC 33453 / NBRC 100688 / NCTC 11704 / L1) (Acholeplasma florum).